A 114-amino-acid polypeptide reads, in one-letter code: Large ribosomal subunit protein P1 (114 aa).

Residues 55-114 (EEAAAAPAAAPAASGSDDEAAADDGDDDEEADADEAAEAEDAGDDDDEEPSGEGLGDLFG) are disordered. Residues 56-69 (EAAAAPAAAPAASG) are compositionally biased toward low complexity. A compositionally biased stretch (acidic residues) spans 70–105 (SDDEAAADDGDDDEEADADEAAEAEDAGDDDDEEPS).

Belongs to the eukaryotic ribosomal protein P1/P2 family. Part of the 50S ribosomal subunit. Homodimer, it forms part of the ribosomal stalk which helps the ribosome interact with GTP-bound translation factors. Forms a heptameric uL10/P0(P1)2(P1)2(P1)2 complex, where uL10/P0 forms an elongated spine to which the P1 dimers bind in a sequential fashion.

In terms of biological role, forms part of the ribosomal stalk, playing a central role in the interaction of the ribosome with GTP-bound translation factors. This is Large ribosomal subunit protein P1 from Halobacterium salinarum (strain ATCC 700922 / JCM 11081 / NRC-1) (Halobacterium halobium).